The chain runs to 138 residues: Thyrotropin subunit beta (138 aa).

An N-terminal signal peptide occupies residues 1–20 (MTATFLMSLLFGLAFGQTMS). 6 disulfides stabilise this stretch: Cys-22/Cys-72, Cys-36/Cys-87, Cys-39/Cys-125, Cys-47/Cys-103, Cys-51/Cys-105, and Cys-108/Cys-115. Asn-43 carries an N-linked (GlcNAc...) asparagine glycan. The propeptide occupies 133–138 (LVGFPV).

This sequence belongs to the glycoprotein hormones subunit beta family. Heterodimer of a common alpha chain and a unique beta chain which confers biological specificity to thyrotropin, lutropin, follitropin and gonadotropin.

It localises to the secreted. Its function is as follows. Indispensable for the control of thyroid structure and metabolism. The protein is Thyrotropin subunit beta (TSHB) of Monodelphis domestica (Gray short-tailed opossum).